A 312-amino-acid chain; its full sequence is Olfactory receptor 51I2 (312 aa).

The Extracellular portion of the chain corresponds to 1 to 25 (MGLFNVTHPAFFLLTGIPGLESSHS). A glycan (N-linked (GlcNAc...) asparagine) is linked at Asn5. A helical membrane pass occupies residues 26 to 46 (WLSGPLCVMYAVALGGNTVIL). Over 47 to 54 (QAVRVEPS) the chain is Cytoplasmic. Residues 55-75 (LHEPMYYFLSMLSFSDVAISM) traverse the membrane as a helical segment. Residues 76–99 (ATLPTVLRTFCLNARNITFDACLI) lie on the Extracellular side of the membrane. A disulfide bridge connects residues Cys97 and Cys189. A helical transmembrane segment spans residues 100–120 (QMFLIHFFSMMESGILLAMSF). Topologically, residues 121-139 (DRYVAICDPLRYATVLTTE) are cytoplasmic. Residues 140–160 (VIAAMGLGAAARSFITLFPLP) traverse the membrane as a helical segment. Residues 161 to 196 (FLIKRLPICRSNVLSHSYCLHPDMMRLACADISINS) are Extracellular-facing. The chain crosses the membrane as a helical span at residues 197–217 (IYGLFVLVSTFGMDLFFIFLS). Residues 218–237 (YVLILRSVMATASREERLKA) are Cytoplasmic-facing. A helical transmembrane segment spans residues 238-258 (LNTCVSHILAVLAFYVPMIGV). Topologically, residues 259–273 (STVHRFGKHVPCYIH) are extracellular. Residues 274–294 (VLMSNVYLFVPPVLNPLIYSA) traverse the membrane as a helical segment. Residues 295 to 312 (KTKEIRRAIFRMFHHIKI) lie on the Cytoplasmic side of the membrane.

This sequence belongs to the G-protein coupled receptor 1 family.

It localises to the cell membrane. Odorant receptor. The chain is Olfactory receptor 51I2 (OR51I2) from Homo sapiens (Human).